Consider the following 84-residue polypeptide: Molybdopterin synthase sulfur carrier subunit (84 aa).

Residue Gly84 is modified to 1-thioglycine; alternate. Gly84 bears the Glycyl adenylate; alternate mark.

The protein belongs to the MoaD family. MOCS2A subfamily. Heterotetramer; composed of 2 small (MOCS2A) and 2 large (MOCS2B) subunits. C-terminal thiocarboxylation occurs in 2 steps, it is first acyl-adenylated (-COAMP) via the hesA/moeB/thiF part of MOCS3, then thiocarboxylated (-COSH) via the rhodanese domain of MOCS3.

The protein resides in the cytoplasm. The protein operates within cofactor biosynthesis; molybdopterin biosynthesis. In terms of biological role, acts as a sulfur carrier required for molybdopterin biosynthesis. Component of the molybdopterin synthase complex that catalyzes the conversion of precursor Z into molybdopterin by mediating the incorporation of 2 sulfur atoms into precursor Z to generate a dithiolene group. In the complex, serves as sulfur donor by being thiocarboxylated (-COSH) at its C-terminus by MOCS3. After interaction with MOCS2B, the sulfur is then transferred to precursor Z to form molybdopterin. This is Molybdopterin synthase sulfur carrier subunit from Caenorhabditis briggsae.